Reading from the N-terminus, the 285-residue chain is Ribosomal RNA small subunit methyltransferase A (285 aa).

S-adenosyl-L-methionine contacts are provided by asparagine 11, leucine 13, glycine 37, glutamate 57, aspartate 85, and asparagine 105.

This sequence belongs to the class I-like SAM-binding methyltransferase superfamily. rRNA adenine N(6)-methyltransferase family. RsmA subfamily.

It localises to the cytoplasm. The enzyme catalyses adenosine(1518)/adenosine(1519) in 16S rRNA + 4 S-adenosyl-L-methionine = N(6)-dimethyladenosine(1518)/N(6)-dimethyladenosine(1519) in 16S rRNA + 4 S-adenosyl-L-homocysteine + 4 H(+). In terms of biological role, specifically dimethylates two adjacent adenosines (A1518 and A1519) in the loop of a conserved hairpin near the 3'-end of 16S rRNA in the 30S particle. May play a critical role in biogenesis of 30S subunits. This chain is Ribosomal RNA small subunit methyltransferase A, found in Campylobacter curvus (strain 525.92).